The following is a 512-amino-acid chain: ATP synthase subunit alpha 2 (512 aa).

169 to 176 (GDRQTGKT) contributes to the ATP binding site.

This sequence belongs to the ATPase alpha/beta chains family. In terms of assembly, F-type ATPases have 2 components, CF(1) - the catalytic core - and CF(0) - the membrane proton channel. CF(1) has five subunits: alpha(3), beta(3), gamma(1), delta(1), epsilon(1). CF(0) has four main subunits: a(1), b(1), b'(1) and c(9-12).

The protein resides in the cell inner membrane. It carries out the reaction ATP + H2O + 4 H(+)(in) = ADP + phosphate + 5 H(+)(out). Functionally, produces ATP from ADP in the presence of a proton gradient across the membrane. The alpha chain is a regulatory subunit. This chain is ATP synthase subunit alpha 2, found in Dinoroseobacter shibae (strain DSM 16493 / NCIMB 14021 / DFL 12).